Here is a 193-residue protein sequence, read N- to C-terminus: Cysteine and glycine-rich protein 2 (193 aa).

The 52-residue stretch at 10–61 (CGACGRTVYHAEEVQCDGRTFHRCCFLCMVCRKNLDSTTVAIHDEEIYCKSC) folds into the LIM zinc-binding 1 domain. A Nuclear localization signal motif is present at residues 64-69 (KKYGPK). A Glycyl lysine isopeptide (Lys-Gly) (interchain with G-Cter in SUMO2) cross-link involves residue Lys-91. 2 positions are modified to N6-acetyllysine: Lys-112 and Lys-131. The LIM zinc-binding 2 domain maps to 119-170 (CSRCGDSVYAAEKIIGAGKPWHKNCFRCAKCGKSLESTTLTEKEGEIYCKGC). N6-acetyllysine; alternate is present on Lys-137. Lys-137 bears the N6-succinyllysine; alternate mark. Residue Lys-161 is modified to N6-acetyllysine.

Interacts with KAT14. The LIM domain 1 is necessary and sufficient for this interaction. Interacts with GLRX3. Highly expressed in the aorta; weakly found in the kidney, thymus, and intestine. Barely detectable in brain, testis, esophagus, lung, liver, aortic adventitia, vena cava, or uterus; not present in heart and skeletal muscle.

The protein resides in the nucleus. In terms of biological role, drastically down-regulated in response to PDGF-BB or cell injury, that promote smooth muscle cell proliferation and dedifferentiation. Seems to play a role in the development of the embryonic vascular system. In Rattus norvegicus (Rat), this protein is Cysteine and glycine-rich protein 2 (Csrp2).